The following is a 556-amino-acid chain: Glutamine--tRNA ligase (556 aa).

Residues 34–44 (PEPNGYLHIGH) carry the 'HIGH' region motif. Residues 35 to 37 (EPN) and 41 to 47 (HIGHAKS) contribute to the ATP site. 2 residues coordinate L-glutamine: D67 and Y212. ATP-binding positions include T231, 261–262 (RL), and 269–271 (MSK). Positions 268–272 (VMSKR) match the 'KMSKS' region motif.

Belongs to the class-I aminoacyl-tRNA synthetase family. Monomer.

It localises to the cytoplasm. The enzyme catalyses tRNA(Gln) + L-glutamine + ATP = L-glutaminyl-tRNA(Gln) + AMP + diphosphate. In Vibrio parahaemolyticus serotype O3:K6 (strain RIMD 2210633), this protein is Glutamine--tRNA ligase.